The following is a 234-amino-acid chain: Gem-associated protein 8 (234 aa).

Positions 60 to 116 (LAQSPAAKGGTSPKSRSKSPSASGDACRRRSRPGKPGPQRRSTEKPARFAEDNDSES) are disordered. Over residues 67-83 (KGGTSPKSRSKSPSASG) the composition is skewed to low complexity. Over residues 100–110 (RSTEKPARFAE) the composition is skewed to basic and acidic residues. A coiled-coil region spans residues 130–153 (ITDELRQYFAETEQHREELRRQHQ).

In terms of assembly, part of the core SMN complex that contains SMN1, GEMIN2/SIP1, DDX20/GEMIN3, GEMIN4, GEMIN5, GEMIN6, GEMIN7, GEMIN8 and STRAP/UNRIP. Part of the SMN-Sm complex that contains SMN1, GEMIN2/SIP1, DDX20/GEMIN3, GEMIN4, GEMIN5, GEMIN6, GEMIN7, GEMIN8, STRAP/UNRIP and the Sm proteins SNRPB, SNRPD1, SNRPD2, SNRPD3, SNRPE, SNRPF and SNRPG. Interacts with GEMIN6; the interaction is direct. Interacts with GEMIN7; the interaction is direct. Interacts with SMN1; the interaction is direct. Interacts with GEMIN4; the interaction is direct.

The protein localises to the nucleus. The protein resides in the gem. Its subcellular location is the cytoplasm. Its function is as follows. The SMN complex catalyzes the assembly of small nuclear ribonucleoproteins (snRNPs), the building blocks of the spliceosome, and thereby plays an important role in the splicing of cellular pre-mRNAs. Most spliceosomal snRNPs contain a common set of Sm proteins SNRPB, SNRPD1, SNRPD2, SNRPD3, SNRPE, SNRPF and SNRPG that assemble in a heptameric protein ring on the Sm site of the small nuclear RNA to form the core snRNP (Sm core). In the cytosol, the Sm proteins SNRPD1, SNRPD2, SNRPE, SNRPF and SNRPG are trapped in an inactive 6S pICln-Sm complex by the chaperone CLNS1A that controls the assembly of the core snRNP. To assemble core snRNPs, the SMN complex accepts the trapped 5Sm proteins from CLNS1A forming an intermediate. Binding of snRNA inside 5Sm triggers eviction of the SMN complex, thereby allowing binding of SNRPD3 and SNRPB to complete assembly of the core snRNP. This is Gem-associated protein 8 (GEMIN8) from Bos taurus (Bovine).